The following is a 159-amino-acid chain: Intron-encoded endonuclease ai4 (159 aa).

This sequence belongs to the LAGLIDADG endonuclease family.

It is found in the mitochondrion. In terms of biological role, mitochondrial DNA endonuclease involved in intron homing. This is Intron-encoded endonuclease ai4 (ai4) from Dictyostelium discoideum (Social amoeba).